A 214-amino-acid polypeptide reads, in one-letter code: Holliday junction branch migration complex subunit RuvA (214 aa).

A domain I region spans residues 1–63 (MISFLRGTVA…EDSLTLFGFS (63 aa)). Residues 64–142 (SDDEREVFDV…PHGTGAAAAP (79 aa)) form a domain II region. The segment at 143–153 (AAAASAPWKPQ) is flexible linker. The segment at 153-214 (QVVAAMTSLG…RAGNRVGSRG (62 aa)) is domain III.

It belongs to the RuvA family. In terms of assembly, homotetramer. Forms an RuvA(8)-RuvB(12)-Holliday junction (HJ) complex. HJ DNA is sandwiched between 2 RuvA tetramers; dsDNA enters through RuvA and exits via RuvB. An RuvB hexamer assembles on each DNA strand where it exits the tetramer. Each RuvB hexamer is contacted by two RuvA subunits (via domain III) on 2 adjacent RuvB subunits; this complex drives branch migration. In the full resolvosome a probable DNA-RuvA(4)-RuvB(12)-RuvC(2) complex forms which resolves the HJ.

The protein localises to the cytoplasm. Functionally, the RuvA-RuvB-RuvC complex processes Holliday junction (HJ) DNA during genetic recombination and DNA repair, while the RuvA-RuvB complex plays an important role in the rescue of blocked DNA replication forks via replication fork reversal (RFR). RuvA specifically binds to HJ cruciform DNA, conferring on it an open structure. The RuvB hexamer acts as an ATP-dependent pump, pulling dsDNA into and through the RuvAB complex. HJ branch migration allows RuvC to scan DNA until it finds its consensus sequence, where it cleaves and resolves the cruciform DNA. In Arthrobacter sp. (strain FB24), this protein is Holliday junction branch migration complex subunit RuvA.